The following is a 758-amino-acid chain: Zinc finger protein VAR3, chloroplastic (758 aa).

The segment at Phe-122–Ile-502 is 3 X approximate repeat. 2 consecutive RanBP2-type zinc fingers follow at residues Lys-276–Lys-305 and Leu-308–Arg-338. Copy 1 of the repeat occupies Arg-368–Leu-415. Disordered stretches follow at residues Pro-410–Ser-470, Gly-512–Pro-545, Glu-572–Phe-606, Thr-629–Ser-654, and Lys-727–Lys-758. Basic and acidic residues-rich tracts occupy residues Arg-457–Glu-469, Gln-519–Pro-545, and Glu-572–Asn-581. The stretch at Arg-547–Pro-596 is repeat 2. Residues Arg-688 to Leu-736 form repeat 3.

In terms of assembly, interacts in vitro with the chloroplast-located protein CCD4/NCED4. Homodimer. Interacts with ORRM1. Interacts with PCMP-H51/CRR28 and PCMP-H12/OTP82. Interacts with ORRM6. Weakly expressed in leaves and roots.

It is found in the plastid. It localises to the chloroplast. Its function is as follows. Probable component of some protein complex required for chloroplast and palisade cell development. Involved in C-to-U editing of chloroplastic RNA. Controls a large number of chloroplastic editing sites. Binds the editing recognition trans-factors PCMP-H51/CRR28 and PCMP-H12/OTP82. The chain is Zinc finger protein VAR3, chloroplastic from Arabidopsis thaliana (Mouse-ear cress).